Consider the following 207-residue polypeptide: MSDATLAADPPRLYLASASPRRRELLLQIGLTHTVLRVPAPPGEDEPQHPGEAACDYVRRTARDKAERGQAWLHSQQLPDLPLLAADTTVIVDGIVLGKPADRADALRMLAALSGREHEVHTAVALCHQGRLREDVSITRVRMRALEQAELQRYCDSGEPYGKAGAYGIQGLAGAFVSHIAGSYTGVMGLPLYETAALLRSAGIAVP.

Asp-87 functions as the Proton acceptor in the catalytic mechanism.

This sequence belongs to the Maf family. YhdE subfamily. It depends on a divalent metal cation as a cofactor.

Its subcellular location is the cytoplasm. It catalyses the reaction dTTP + H2O = dTMP + diphosphate + H(+). The enzyme catalyses UTP + H2O = UMP + diphosphate + H(+). In terms of biological role, nucleoside triphosphate pyrophosphatase that hydrolyzes dTTP and UTP. May have a dual role in cell division arrest and in preventing the incorporation of modified nucleotides into cellular nucleic acids. The protein is dTTP/UTP pyrophosphatase of Bordetella bronchiseptica (strain ATCC BAA-588 / NCTC 13252 / RB50) (Alcaligenes bronchisepticus).